The following is a 402-amino-acid chain: Dynactin subunit 2 (402 aa).

The interval 1–24 is disordered; that stretch reads MADPKYADLPGIARNEPDVYETSD. At alanine 2 the chain carries N-acetylalanine. The residue at position 6 (tyrosine 6) is a Phosphotyrosine. Serine 83 is modified (phosphoserine). Residue tyrosine 86 is modified to Phosphotyrosine. Positions 100–130 form a coiled coil; it reads QQKYQRLLHEVQELTTEVEKIKTTVKESATE. Phosphothreonine is present on residues threonine 134 and threonine 199. A disordered region spans residues 185-205; it reads KSSKGSSGGKSTGGTPPDSSL. A coiled-coil region spans residues 215-247; sequence EQDKFSQAAKVAELEKRLTELEATVRCDQDAQN. Position 321 is a phosphoserine (serine 321).

It belongs to the dynactin subunit 2 family. Subunit of dynactin, a multiprotein complex part of a tripartite complex with dynein and a adapter, such as BICDL1, BICD2 or HOOK3. The dynactin complex is built around ACTR1A/ACTB filament and consists of an actin-related filament composed of a shoulder domain, a pointed end and a barbed end. Its length is defined by its flexible shoulder domain. The soulder is composed of 2 DCTN1 subunits, 4 DCTN2 and 2 DCTN3. The 4 DCNT2 (via N-terminus) bind the ACTR1A filament and act as molecular rulers to determine the length. The pointed end is important for binding dynein-dynactin cargo adapters and consists of 4 subunits: ACTR10, DCNT4, DCTN5 and DCTN6. The barbed end is composed of a CAPZA1:CAPZB heterodimers, which binds ACTR1A/ACTB filament and dynactin and stabilizes dynactin. Interacts with BICD2 and CEP135. Interacts with DYNAP. Interacts with ECPAS. Interacts with MAPRE1.

It localises to the cytoplasm. It is found in the cytoskeleton. The protein localises to the microtubule organizing center. Its subcellular location is the centrosome. The protein resides in the membrane. Its function is as follows. Part of the dynactin complex that activates the molecular motor dynein for ultra-processive transport along microtubules. In the dynactin soulder domain, binds the ACTR1A filament and acts as a molecular ruler to determine the length. Modulates cytoplasmic dynein binding to an organelle, and plays a role in prometaphase chromosome alignment and spindle organization during mitosis. Involved in anchoring microtubules to centrosomes. May play a role in synapse formation during brain development. In Rattus norvegicus (Rat), this protein is Dynactin subunit 2 (Dctn2).